The primary structure comprises 395 residues: GPI-anchor transamidase (395 aa).

A signal peptide spans 1–27 (MAAPCFLTLRVATLAALALLSLGSSAA). Residues 28–368 (GHIEDQAEQF…PKPRDWHPPG (341 aa)) lie on the Lumenal side of the membrane. Ca(2+) contacts are provided by aspartate 79, isoleucine 82, glutamate 118, and aspartate 120. The Proton donor role is filled by histidine 164. Residue cysteine 206 is the Nucleophile; acyl-thioester intermediate of the active site. The a protein site is built by cysteine 206, serine 232, and serine 234. Positions 231-236 (DSLSHQ) are autoinhibitory loop. Cysteine 275 and cysteine 280 are oxidised to a cystine. The helical transmembrane segment at 369–385 (GFILGLWALIIMVFFKT) threads the bilayer. Residues 386 to 395 (YGIKHMKFIF) lie on the Cytoplasmic side of the membrane.

It belongs to the peptidase C13 family. Heteropentamer. Part of the GPI-anchor transamidase complex, consisting of PIGK, PIGT, PIGS, PIGU and GAA1. Interacts with GPAA1. Interacts with PIGT; this interaction, via a disulfide link, stabilizes the expression of GAA1 and PIGK and links them to PIGS. The disulfide bond between PIGK/GPI8 and PIGT is important for normal enzyme activity.

It is found in the endoplasmic reticulum membrane. The protein operates within glycolipid biosynthesis; glycosylphosphatidylinositol-anchor biosynthesis. With respect to regulation, in the absence of proproteins substrates, exists in an inactive state with a disrupted catalytic site by an autoinhibitory loop. The binding of proprotein substrates, particularly the CSP region, to GPI-T triggers concerted conformational changes that alleviate the inhibition by the autoinhibitory loop. Meanwhile, proprotein residues near the omega- site induce the formation of a catalytic cleft for catalysis, following which the products are released and GPI-T reverts to the inactive state. Catalytic subunit of the glycosylphosphatidylinositol-anchor (GPI-anchor) transamidase (GPI-T) complex that catalyzes the formation of the linkage between a proprotein and a GPI-anchor and participates in GPI anchored protein biosynthesis. Recognizes diverse proproteins at a C-terminal signal peptide (CSP) region that lacks consensus sequence and replaces it with a GPI-anchor via a transamidation reaction. Transamidation catalysis reaction follows a two-phase mechanism. In the acyl-enzyme phase, the carbonyl group of the proproteins's omega-site undergoes a nucleophilic attack forming an enzyme-substrate thioester bond. Followed by a general acid catalysis that allows CSP releasing, regenerating the carbonyl, and forming the acyl-enzyme intermediate. In the GPI-anchor attachment phase, the amino group of the GPI-anchor's ethanolamine phosphate, the one on third mannose (EtNP3), mediates a nucleophilic attack on the carbonyl of the acyl-enzyme intermediate, replacing the CSP, allowing GPI-anchor attachment to the omega-residue, therefore forming the product and freeing the enzyme. The protein is GPI-anchor transamidase of Mus musculus (Mouse).